The sequence spans 89 residues: MSLDTTEKQQLINTHQTHGTDTGSAEVQVAMLSERINRLSRHLQNNIHDFSSRQGLLKMIGRRKRLLSYMRSKSEQRYADTIAKLGIRG.

The interval 1 to 25 (MSLDTTEKQQLINTHQTHGTDTGSA) is disordered. A compositionally biased stretch (polar residues) spans 8-25 (KQQLINTHQTHGTDTGSA).

Belongs to the universal ribosomal protein uS15 family. As to quaternary structure, part of the 30S ribosomal subunit. Forms a bridge to the 50S subunit in the 70S ribosome, contacting the 23S rRNA.

One of the primary rRNA binding proteins, it binds directly to 16S rRNA where it helps nucleate assembly of the platform of the 30S subunit by binding and bridging several RNA helices of the 16S rRNA. Its function is as follows. Forms an intersubunit bridge (bridge B4) with the 23S rRNA of the 50S subunit in the ribosome. The chain is Small ribosomal subunit protein uS15 from Synechococcus sp. (strain CC9605).